The sequence spans 147 residues: Large ribosomal subunit protein bL9 (147 aa).

It belongs to the bacterial ribosomal protein bL9 family.

Functionally, binds to the 23S rRNA. The polypeptide is Large ribosomal subunit protein bL9 (Bacteroides fragilis (strain YCH46)).